The chain runs to 366 residues: Histidinol-phosphate aminotransferase 2 (366 aa).

Residues 1-11 (MQVKDQLSSLQ) show a composition bias toward polar residues. The tract at residues 1-21 (MQVKDQLSSLQPYKPGKSPEQ) is disordered. At lysine 222 the chain carries N6-(pyridoxal phosphate)lysine.

The protein belongs to the class-II pyridoxal-phosphate-dependent aminotransferase family. Histidinol-phosphate aminotransferase subfamily. As to quaternary structure, homodimer. The cofactor is pyridoxal 5'-phosphate.

It catalyses the reaction L-histidinol phosphate + 2-oxoglutarate = 3-(imidazol-4-yl)-2-oxopropyl phosphate + L-glutamate. It participates in amino-acid biosynthesis; L-histidine biosynthesis; L-histidine from 5-phospho-alpha-D-ribose 1-diphosphate: step 7/9. The chain is Histidinol-phosphate aminotransferase 2 (hisC2) from Bacillus anthracis.